A 311-amino-acid polypeptide reads, in one-letter code: MLKTTFANAEFANPFMNASGVHCMTTEDLEELKASQAGAYITKSSTLEKREGNPLPRYVDLELGSINSMGLPNLGFDYYLDYVLKNQKEKAQEAPIFFSIAGMSAAENIAMLKKIQESNFSGITELNLSCPNVPGKPQLAYDFEATEKLLKEVFTFFTKPLGVKLPPYFDLVHFDIMAEILNQFPLTYVNSVNSIGNGLFIDSEAESVVIKPKDGFGGIGGAYIKPTALANVRAFYTRLKPEIKIIGTGGIETGQDAFEHLLCGATMLQIGTALHKEGPAIFDRIIKELEEIMDKKGYQSIADFHGKLKSL.

Residues Ser19 and Lys43–Ser44 contribute to the FMN site. Residues Lys43, Asn67–Leu71, and Asn127 each bind substrate. Asn127 provides a ligand contact to FMN. Cys130 functions as the Nucleophile in the catalytic mechanism. Residues Lys164 and Val192 each coordinate FMN. Asn193–Ser194 serves as a coordination point for substrate. Residues Gly221, Gly249–Gly250, and Gly271–Thr272 contribute to the FMN site.

Belongs to the dihydroorotate dehydrogenase family. Type 1 subfamily. In terms of assembly, homodimer. FMN is required as a cofactor.

Its subcellular location is the cytoplasm. It catalyses the reaction (S)-dihydroorotate + fumarate = orotate + succinate. It functions in the pathway pyrimidine metabolism; UMP biosynthesis via de novo pathway. Catalyzes the conversion of dihydroorotate to orotate with fumarate as the electron acceptor. The polypeptide is Dihydroorotate dehydrogenase A (fumarate) (pyrDA) (Lactococcus lactis subsp. lactis (strain IL1403) (Streptococcus lactis)).